The chain runs to 843 residues: Leucine--tRNA ligase (843 aa).

Residues P61 to H71 carry the 'HIGH' region motif. The 'KMSKS' region signature appears at A606–S610. ATP is bound at residue K609.

The protein belongs to the class-I aminoacyl-tRNA synthetase family.

The protein resides in the cytoplasm. The catalysed reaction is tRNA(Leu) + L-leucine + ATP = L-leucyl-tRNA(Leu) + AMP + diphosphate. This chain is Leucine--tRNA ligase, found in Arthrobacter sp. (strain FB24).